The chain runs to 484 residues: Replication factor C large subunit (484 aa).

46–53 is a binding site for ATP; the sequence is GPPGSGKT. Residues 463–478 are compositionally biased toward basic and acidic residues; sequence NADTKEKEKKDPKKQA. The tract at residues 463–484 is disordered; sequence NADTKEKEKKDPKKQATLDSFF.

This sequence belongs to the activator 1 small subunits family. RfcL subfamily. In terms of assembly, heteromultimer composed of small subunits (RfcS) and large subunits (RfcL).

Functionally, part of the RFC clamp loader complex which loads the PCNA sliding clamp onto DNA. The protein is Replication factor C large subunit of Methanococcus maripaludis (strain C6 / ATCC BAA-1332).